Here is a 224-residue protein sequence, read N- to C-terminus: Uracil-DNA glycosylase (224 aa).

Asp62 functions as the Proton acceptor in the catalytic mechanism.

It belongs to the uracil-DNA glycosylase (UDG) superfamily. UNG family.

The protein resides in the cytoplasm. The catalysed reaction is Hydrolyzes single-stranded DNA or mismatched double-stranded DNA and polynucleotides, releasing free uracil.. Excises uracil residues from the DNA which can arise as a result of misincorporation of dUMP residues by DNA polymerase or due to deamination of cytosine. The polypeptide is Uracil-DNA glycosylase (Aliivibrio fischeri (strain ATCC 700601 / ES114) (Vibrio fischeri)).